A 343-amino-acid polypeptide reads, in one-letter code: N-acetyl-gamma-glutamyl-phosphate reductase (343 aa).

Cys149 is a catalytic residue.

Belongs to the NAGSA dehydrogenase family. Type 1 subfamily.

The protein localises to the cytoplasm. The enzyme catalyses N-acetyl-L-glutamate 5-semialdehyde + phosphate + NADP(+) = N-acetyl-L-glutamyl 5-phosphate + NADPH + H(+). Its pathway is amino-acid biosynthesis; L-arginine biosynthesis; N(2)-acetyl-L-ornithine from L-glutamate: step 3/4. Functionally, catalyzes the NADPH-dependent reduction of N-acetyl-5-glutamyl phosphate to yield N-acetyl-L-glutamate 5-semialdehyde. This is N-acetyl-gamma-glutamyl-phosphate reductase from Exiguobacterium sibiricum (strain DSM 17290 / CCUG 55495 / CIP 109462 / JCM 13490 / 255-15).